We begin with the raw amino-acid sequence, 326 residues long: Putative HTH-type transcriptional regulatory protein MMP0678 (326 aa).

One can recognise an HTH cro/C1-type domain in the interval 128-183 (LRETREKLKISVGELAEVSRVSRKTIYKYEQNEANPSAEVAIKIEEYLDVPLIKGI). Residues 139–158 (VGELAEVSRVSRKTIYKYEQ) constitute a DNA-binding region (H-T-H motif).

The protein is Putative HTH-type transcriptional regulatory protein MMP0678 of Methanococcus maripaludis (strain DSM 14266 / JCM 13030 / NBRC 101832 / S2 / LL).